The primary structure comprises 352 residues: tRNA pseudouridine synthase D (352 aa).

The active-site Nucleophile is the D81. In terms of domain architecture, TRUD spans 157–303; that stretch reads GVPNYFGTQR…MDHERRILRL (147 aa).

The protein belongs to the pseudouridine synthase TruD family.

It carries out the reaction uridine(13) in tRNA = pseudouridine(13) in tRNA. Its function is as follows. Responsible for synthesis of pseudouridine from uracil-13 in transfer RNAs. The sequence is that of tRNA pseudouridine synthase D from Pseudomonas putida (strain GB-1).